A 74-amino-acid chain; its full sequence is Mitochondrial import receptor subunit TOM6 homolog (74 aa).

A compositionally biased stretch (low complexity) spans 1-20; sequence MASSGVTVSAAGSASEASEV. A disordered region spans residues 1 to 21; it reads MASSGVTVSAAGSASEASEVP. Alanine 2 carries the N-acetylalanine modification.

Belongs to the Tom6 family. In terms of assembly, forms part of the preprotein translocase complex of the outer mitochondrial membrane (TOM complex) which consists of at least 7 different proteins (TOMM5, TOMM6, TOMM7, TOMM20, TOMM22, TOMM40 and TOMM70).

Its subcellular location is the mitochondrion outer membrane. The protein is Mitochondrial import receptor subunit TOM6 homolog (Tomm6) of Mus musculus (Mouse).